The sequence spans 180 residues: Large ribosomal subunit protein uL6 (180 aa).

This sequence belongs to the universal ribosomal protein uL6 family. As to quaternary structure, part of the 50S ribosomal subunit.

Functionally, this protein binds to the 23S rRNA, and is important in its secondary structure. It is located near the subunit interface in the base of the L7/L12 stalk, and near the tRNA binding site of the peptidyltransferase center. The sequence is that of Large ribosomal subunit protein uL6 from Clostridium botulinum (strain Langeland / NCTC 10281 / Type F).